Here is a 384-residue protein sequence, read N- to C-terminus: Putative spore germination protein YfkR (384 aa).

Residues Met-1–Gly-20 form the signal peptide. A lipid anchor (N-palmitoyl cysteine) is attached at Cys-21. A lipid anchor (S-diacylglycerol cysteine) is attached at Cys-21.

It belongs to the GerABKC lipoprotein family.

The protein resides in the cell membrane. Its function is as follows. May be involved in spore germination. This Bacillus subtilis (strain 168) protein is Putative spore germination protein YfkR (yfkR).